Reading from the N-terminus, the 154-residue chain is UPF0756 membrane protein CKR_1028 (154 aa).

4 helical membrane passes run 5–25 (IILIIILTASVLGRANSVALA), 48–68 (NGLFLGLVILIASILIPIADG), 82–102 (WLGIFALLVSLFTTYLSGLGM), and 113–133 (IMPALILGAVIAAAFLGGVPV).

The protein belongs to the UPF0756 family.

It localises to the cell membrane. In Clostridium kluyveri (strain NBRC 12016), this protein is UPF0756 membrane protein CKR_1028.